The sequence spans 267 residues: Type III pantothenate kinase (267 aa).

6–13 contacts ATP; the sequence is DSGNSRLK. Substrate contacts are provided by residues Tyr96 and 103-106; that span reads GADR. Catalysis depends on Asp105, which acts as the Proton acceptor. Thr131 is a binding site for ATP. Thr181 serves as a coordination point for substrate.

It belongs to the type III pantothenate kinase family. In terms of assembly, homodimer. NH4(+) serves as cofactor. K(+) is required as a cofactor.

The protein localises to the cytoplasm. The enzyme catalyses (R)-pantothenate + ATP = (R)-4'-phosphopantothenate + ADP + H(+). The protein operates within cofactor biosynthesis; coenzyme A biosynthesis; CoA from (R)-pantothenate: step 1/5. Functionally, catalyzes the phosphorylation of pantothenate (Pan), the first step in CoA biosynthesis. In terms of biological role, activates transcription of the pertussis toxin operon in a BvgAS-dependent manner. May interact with the alpha subunit of RNA polymerase. This chain is Type III pantothenate kinase (coaX), found in Bordetella pertussis (strain Tohama I / ATCC BAA-589 / NCTC 13251).